A 226-amino-acid polypeptide reads, in one-letter code: Pathogenesis-related protein R minor form (226 aa).

Positions 1–25 (MNFLKSFPFYAFLCFGQYFVAVTHA) are cleaved as a signal peptide. 8 cysteine pairs are disulfide-bonded: Cys-34-Cys-225, Cys-75-Cys-85, Cys-90-Cys-96, Cys-140-Cys-214, Cys-145-Cys-197, Cys-153-Cys-163, Cys-167-Cys-176, and Cys-177-Cys-184.

The protein belongs to the thaumatin family.

Its subcellular location is the vacuole. The protein is Pathogenesis-related protein R minor form of Nicotiana tabacum (Common tobacco).